Reading from the N-terminus, the 1036-residue chain is Zinc finger protein 532 (1036 aa).

Disordered regions lie at residues 26-92 (PKAA…LHNG), 106-206 (GAKS…EAES), 220-265 (RKAE…PSSK), and 281-362 (AASD…KVRI). Residues 32 to 52 (SGHDDHESHIKQNAHVDDDSH) show a composition bias toward basic and acidic residues. 3 positions are modified to phosphoserine: Ser-130, Ser-133, and Ser-134. Residues 136–151 (EEFEDDEKIEVDDPPD) show a composition bias toward acidic residues. Lys-175 is modified (N6-acetyllysine). The span at 182-193 (ENSSKTGVSTSG) shows a compositional bias: polar residues. Composition is skewed to basic and acidic residues over residues 194 to 205 (HTDKNKVKREAE) and 220 to 249 (RKAE…EKSD). Residues 253–265 (AAAASSKTKPSSK) show a composition bias toward low complexity. The segment covering 302 to 314 (EVNDSPKAADKSP) has biased composition (basic and acidic residues). Phosphoserine is present on residues Ser-306 and Ser-313. Positions 336–353 (SVSSENSSKGSPSSPVGS) are enriched in low complexity. Phosphoserine is present on Ser-433. Residues Lys-458 and Lys-515 each participate in a glycyl lysine isopeptide (Lys-Gly) (interchain with G-Cter in SUMO2) cross-link. A C2H2-type 1; degenerate zinc finger spans residues 615 to 634 (YKCLECGDAFALEKSLSQHY). Residues 751-775 (LKCLECNEVFQDEPSLATHFQHAAD) form a C2H2-type 2; degenerate zinc finger. The C2H2-type 3 zinc-finger motif lies at 784–807 (HPCRQCDKSFSSSHSLCRHNRIKH). The segment at 814–840 (YACSHCPDSRRTFTKRLMLERHIQLMH) adopts a C2H2-type 4; degenerate zinc-finger fold. The disordered stretch occupies residues 847 to 877 (VKELSDDAGDVTNDEEEEAEIKEDAKVPSPK). Over residues 852–867 (DDAGDVTNDEEEEAEI) the composition is skewed to acidic residues. The span at 868-877 (KEDAKVPSPK) shows a compositional bias: basic and acidic residues. Ser-875 is modified (phosphoserine). Glycyl lysine isopeptide (Lys-Gly) (interchain with G-Cter in SUMO2) cross-links involve residues Lys-879 and Lys-902. 2 consecutive C2H2-type zinc fingers follow at residues 938-961 (HQCR…FIVH) and 999-1021 (RKCK…MRTH). The disordered stretch occupies residues 966–1000 (PQPVSKQNGAGEDSQQENKPSPEDEAAEGAASDRK).

Belongs to the krueppel C2H2-type zinc-finger protein family.

It localises to the nucleus. Functionally, may be involved in transcriptional regulation. The chain is Zinc finger protein 532 (Znf532) from Mus musculus (Mouse).